A 92-amino-acid chain; its full sequence is Small ribosomal subunit protein uS19c (92 aa).

This sequence belongs to the universal ribosomal protein uS19 family.

It localises to the plastid. The protein resides in the chloroplast. Protein S19 forms a complex with S13 that binds strongly to the 16S ribosomal RNA. The polypeptide is Small ribosomal subunit protein uS19c (Lemna minor (Common duckweed)).